Reading from the N-terminus, the 371-residue chain is Rab9 effector protein with kelch motifs (371 aa).

Kelch repeat units lie at residues 47 to 93 (RVLL…FLSA), 98 to 144 (RLWV…TSSA), 149 to 201 (CLYV…AVGT), 202 to 251 (KLFI…VFKD), 252 to 301 (HLYI…VIPW), and 348 to 371 (LLLI…SLIE).

Functionally, rab9 effector required for endosome to trans-Golgi network (TGN) transport. In Gallus gallus (Chicken), this protein is Rab9 effector protein with kelch motifs (RABEPK).